The chain runs to 485 residues: N-succinylglutamate 5-semialdehyde dehydrogenase (485 aa).

220-225 (GSANTG) contributes to the NAD(+) binding site. Active-site residues include Glu243 and Cys278.

It belongs to the aldehyde dehydrogenase family. AstD subfamily.

The enzyme catalyses N-succinyl-L-glutamate 5-semialdehyde + NAD(+) + H2O = N-succinyl-L-glutamate + NADH + 2 H(+). The protein operates within amino-acid degradation; L-arginine degradation via AST pathway; L-glutamate and succinate from L-arginine: step 4/5. Functionally, catalyzes the NAD-dependent reduction of succinylglutamate semialdehyde into succinylglutamate. This is N-succinylglutamate 5-semialdehyde dehydrogenase from Vibrio campbellii (strain ATCC BAA-1116).